Here is a 245-residue protein sequence, read N- to C-terminus: 1-(5-phosphoribosyl)-5-[(5-phosphoribosylamino)methylideneamino] imidazole-4-carboxamide isomerase (245 aa).

Aspartate 7 serves as the catalytic Proton acceptor. The active-site Proton donor is aspartate 129.

The protein belongs to the HisA/HisF family.

The protein localises to the cytoplasm. The enzyme catalyses 1-(5-phospho-beta-D-ribosyl)-5-[(5-phospho-beta-D-ribosylamino)methylideneamino]imidazole-4-carboxamide = 5-[(5-phospho-1-deoxy-D-ribulos-1-ylimino)methylamino]-1-(5-phospho-beta-D-ribosyl)imidazole-4-carboxamide. Its pathway is amino-acid biosynthesis; L-histidine biosynthesis; L-histidine from 5-phospho-alpha-D-ribose 1-diphosphate: step 4/9. The polypeptide is 1-(5-phosphoribosyl)-5-[(5-phosphoribosylamino)methylideneamino] imidazole-4-carboxamide isomerase (Serratia proteamaculans (strain 568)).